Reading from the N-terminus, the 193-residue chain is Acyl carrier protein phosphodiesterase (193 aa).

It belongs to the AcpH family.

The catalysed reaction is holo-[ACP] + H2O = apo-[ACP] + (R)-4'-phosphopantetheine + H(+). Converts holo-ACP to apo-ACP by hydrolytic cleavage of the phosphopantetheine prosthetic group from ACP. This chain is Acyl carrier protein phosphodiesterase, found in Shigella boydii serotype 4 (strain Sb227).